The sequence spans 470 residues: Argininosuccinate lyase (470 aa).

It belongs to the lyase 1 family. Argininosuccinate lyase subfamily.

Its subcellular location is the cytoplasm. It carries out the reaction 2-(N(omega)-L-arginino)succinate = fumarate + L-arginine. The protein operates within amino-acid biosynthesis; L-arginine biosynthesis; L-arginine from L-ornithine and carbamoyl phosphate: step 3/3. The protein is Argininosuccinate lyase of Mycobacterium leprae (strain Br4923).